A 385-amino-acid polypeptide reads, in one-letter code: Probable dual-specificity RNA methyltransferase RlmN (385 aa).

Residues 1 to 35 (MNVKEPAEEAAIQLRTERQRIEPEGEEQSEQPTDL) are disordered. E121 serves as the catalytic Proton acceptor. The region spanning 132 to 367 (TRDRVTVCLS…AVIREERGQD (236 aa)) is the Radical SAM core domain. C139 and C372 are disulfide-bonded. The [4Fe-4S] cluster site is built by C146, C150, and C153. S-adenosyl-L-methionine-binding positions include 198–199 (GE), S230, 253–255 (SLH), and N329. C372 acts as the S-methylcysteine intermediate in catalysis.

This sequence belongs to the radical SAM superfamily. RlmN family. [4Fe-4S] cluster serves as cofactor.

It localises to the cytoplasm. It carries out the reaction adenosine(2503) in 23S rRNA + 2 reduced [2Fe-2S]-[ferredoxin] + 2 S-adenosyl-L-methionine = 2-methyladenosine(2503) in 23S rRNA + 5'-deoxyadenosine + L-methionine + 2 oxidized [2Fe-2S]-[ferredoxin] + S-adenosyl-L-homocysteine. It catalyses the reaction adenosine(37) in tRNA + 2 reduced [2Fe-2S]-[ferredoxin] + 2 S-adenosyl-L-methionine = 2-methyladenosine(37) in tRNA + 5'-deoxyadenosine + L-methionine + 2 oxidized [2Fe-2S]-[ferredoxin] + S-adenosyl-L-homocysteine. Functionally, specifically methylates position 2 of adenine 2503 in 23S rRNA and position 2 of adenine 37 in tRNAs. This chain is Probable dual-specificity RNA methyltransferase RlmN, found in Heliobacterium modesticaldum (strain ATCC 51547 / Ice1).